The following is a 426-amino-acid chain: Glutamate-1-semialdehyde 2,1-aminomutase (426 aa).

At K265 the chain carries N6-(pyridoxal phosphate)lysine.

This sequence belongs to the class-III pyridoxal-phosphate-dependent aminotransferase family. HemL subfamily. In terms of assembly, homodimer. Requires pyridoxal 5'-phosphate as cofactor.

It localises to the cytoplasm. The catalysed reaction is (S)-4-amino-5-oxopentanoate = 5-aminolevulinate. It participates in porphyrin-containing compound metabolism; protoporphyrin-IX biosynthesis; 5-aminolevulinate from L-glutamyl-tRNA(Glu): step 2/2. The polypeptide is Glutamate-1-semialdehyde 2,1-aminomutase (Pseudoalteromonas translucida (strain TAC 125)).